Here is a 155-residue protein sequence, read N- to C-terminus: 3-hydroxyacyl-[acyl-carrier-protein] dehydratase FabZ (155 aa).

His58 is an active-site residue.

The protein belongs to the thioester dehydratase family. FabZ subfamily.

It localises to the cytoplasm. It catalyses the reaction a (3R)-hydroxyacyl-[ACP] = a (2E)-enoyl-[ACP] + H2O. In terms of biological role, involved in unsaturated fatty acids biosynthesis. Catalyzes the dehydration of short chain beta-hydroxyacyl-ACPs and long chain saturated and unsaturated beta-hydroxyacyl-ACPs. The sequence is that of 3-hydroxyacyl-[acyl-carrier-protein] dehydratase FabZ from Rhizobium etli (strain ATCC 51251 / DSM 11541 / JCM 21823 / NBRC 15573 / CFN 42).